The sequence spans 401 residues: 26S proteasome regulatory subunit 6A (401 aa).

189–196 (GPPGTGKT) lines the ATP pocket.

The protein belongs to the AAA ATPase family. The 26S proteasome consists of a 20S proteasome core and two 19S regulatory subunits. The 20S proteasome core is composed of 28 subunits that are arranged in four stacked rings, resulting in a barrel-shaped structure. The two end rings are each formed by seven alpha subunits, and the two central rings are each formed by seven beta subunits. The catalytic chamber with the active sites is on the inside of the barrel.

The protein localises to the cytoplasm. Its subcellular location is the nucleus. Functionally, acts as a regulatory subunit of the 26S proteasome which degrades poly-ubiquitinated proteins in the cytoplasm and in the nucleus. It is essential for the regulated turnover of proteins and for the removal of misfolded proteins. The proteasome is a multicatalytic proteinase complex that is characterized by its ability to cleave peptides with Arg, Phe, Tyr, Leu, and Glu adjacent to the leaving group at neutral or slightly basic pH. The sequence is that of 26S proteasome regulatory subunit 6A (RPT5) from Encephalitozoon cuniculi (strain GB-M1) (Microsporidian parasite).